The primary structure comprises 1706 residues: Serine/threonine-protein kinase vps15 (1706 aa).

A Protein kinase domain is found at Tyr24–Phe293. Residues Leu30–Thr38 and Lys52 contribute to the ATP site. Residues Asn56–Leu94 form an HEAT 1 repeat. The active-site Proton acceptor is the Asp146. HEAT repeat units lie at residues Leu426–Asp465, Glu466–Ser504, Phe511–Lys549, His587–Lys625, Ala626–Pro664, Arg665–Phe703, and Lys705–Asp743. Ser957 carries the phosphoserine modification. Tyr958 carries the phosphotyrosine modification. The tract at residues Thr982–Ser1099 is disordered. Basic and acidic residues-rich tracts occupy residues Lys984–Asn1002 and Asp1014–Glu1023. Residues Asp1029–Tyr1055 show a composition bias toward polar residues. Residues Asn1056–Pro1069 are compositionally biased toward low complexity. Over residues Lys1079–Gly1090 the composition is skewed to basic and acidic residues. WD repeat units follow at residues Leu1213–Ser1252 and Leu1368–Ser1407. The segment covering Asn1431–Val1442 has biased composition (polar residues). Residues Asn1431–Ser1461 form a disordered region. A WD 3 repeat occupies Cys1577–Ser1622.

This sequence belongs to the protein kinase superfamily. Ser/Thr protein kinase family. Component of the autophagy-specific vps34 PI3-kinase complex I composed of vps15, atg6, pik3/vps34, atg14 and atg38. Also a component of the vps34 PI3-kinase complex II composed of atg6, pik3, vps15 and vps38.

The enzyme catalyses L-seryl-[protein] + ATP = O-phospho-L-seryl-[protein] + ADP + H(+). The catalysed reaction is L-threonyl-[protein] + ATP = O-phospho-L-threonyl-[protein] + ADP + H(+). Functionally, functions as a part of the autophagy-specific VPS34 PI3-kinase complex I that plays a role in autophagosome assembly. This complex is essential to recruit the atg8-phosphatidylinositol conjugate and the atg12-atg5 conjugate to the pre-autophagosomal structure. Also functions as part of the VPS34 PI3-kinase complex II. The polypeptide is Serine/threonine-protein kinase vps15 (Schizosaccharomyces pombe (strain 972 / ATCC 24843) (Fission yeast)).